The following is a 372-amino-acid chain: Aminomethyltransferase (372 aa).

It belongs to the GcvT family. The glycine cleavage system is composed of four proteins: P, T, L and H.

It carries out the reaction N(6)-[(R)-S(8)-aminomethyldihydrolipoyl]-L-lysyl-[protein] + (6S)-5,6,7,8-tetrahydrofolate = N(6)-[(R)-dihydrolipoyl]-L-lysyl-[protein] + (6R)-5,10-methylene-5,6,7,8-tetrahydrofolate + NH4(+). Its function is as follows. The glycine cleavage system catalyzes the degradation of glycine. This Paraburkholderia phymatum (strain DSM 17167 / CIP 108236 / LMG 21445 / STM815) (Burkholderia phymatum) protein is Aminomethyltransferase.